The following is a 645-amino-acid chain: Cytoplasmic dynein 1 intermediate chain 1 (645 aa).

Basic and acidic residues-rich tracts occupy residues 1–13 (MSDK…ELER) and 20–58 (QIRE…KRRE). Disordered stretches follow at residues 1–58 (MSDK…KRRE) and 96–125 (MSPS…RTLQ). Ser2 carries the post-translational modification N-acetylserine. The segment at 2-123 (SDKSDLKAEL…SGDLGPLTRT (122 aa)) is interaction with DCTN1. Residues Ser50 and Ser100 each carry the phosphoserine modification. Residues 96 to 107 (MSPSSKSVSTPS) show a composition bias toward low complexity. Position 105 is a phosphothreonine (Thr105). Phosphoserine occurs at positions 107, 111, and 114. The interaction with DYNLT1 stretch occupies residues 147–163 (KLGVSKVTQVDFLPREV). Positions 169–221 (ETQTPLATHQSEEDEEDEEMVESKVGQDSELENQDKKQEVKEAPPRELTEEEK) are disordered. Thr176 is modified (phosphothreonine). A phosphoserine mark is found at Ser179 and Ser197. Over residues 189 to 221 (VESKVGQDSELENQDKKQEVKEAPPRELTEEEK) the composition is skewed to basic and acidic residues. WD repeat units lie at residues 285–334 (SKHR…TTPE), 338–378 (HCQS…RTPV), 387–428 (AHTH…TPQE), 437–477 (SKPV…AGIG), 482–527 (GHQG…PLYS), 530–570 (DNAD…EVPT), and 576–615 (EGAS…VPHN). Phosphoserine is present on Ser635.

Belongs to the dynein intermediate chain family. Homodimer. The cytoplasmic dynein 1 complex consists of two catalytic heavy chains (HCs) and a number of non-catalytic subunits presented by intermediate chains (ICs), light intermediate chains (LICs) and light chains (LCs); the composition seems to vary in respect to the IC, LIC and LC composition. The heavy chain homodimer serves as a scaffold for the probable homodimeric assembly of the respective non-catalytic subunits. The ICs and LICs bind directly to the HC dimer and the LCs assemble on the IC dimer. Interacts with DYNC1H1. Interacts with DYNLT1 and DYNLT3. Interacts with DCTN1. Interacts with MCRS1; the interaction is required for the proper distribution of centriolar satellites.

The protein localises to the cytoplasm. It localises to the chromosome. It is found in the centromere. Its subcellular location is the kinetochore. The protein resides in the cytoskeleton. The protein localises to the spindle pole. Acts as one of several non-catalytic accessory components of the cytoplasmic dynein 1 complex that are thought to be involved in linking dynein to cargos and to adapter proteins that regulate dynein function. Cytoplasmic dynein 1 acts as a motor for the intracellular retrograde motility of vesicles and organelles along microtubules. The intermediate chains mediate the binding of dynein to dynactin via its 150 kDa component (p150-glued) DCTN1. May play a role in mediating the interaction of cytoplasmic dynein with membranous organelles and kinetochores. This is Cytoplasmic dynein 1 intermediate chain 1 (DYNC1I1) from Homo sapiens (Human).